A 259-amino-acid chain; its full sequence is Short-chain dehydrogenase reductase 5 (259 aa).

12 to 36 contacts NAD(+); sequence IITGGASGIGAEAARLFTDHGAKVV. Ser-144 contacts substrate. The active-site Proton acceptor is the Tyr-157.

This sequence belongs to the short-chain dehydrogenases/reductases (SDR) family.

The sequence is that of Short-chain dehydrogenase reductase 5 (SDR5) from Arabidopsis thaliana (Mouse-ear cress).